An 81-amino-acid polypeptide reads, in one-letter code: MDSVISAASVIAAGLAVGLASIGPGVGQGTAAGQAVEGIARQPEAEGKIRGTLLLSLAFMEALTIYGLVVALALLFANPFV.

2 consecutive transmembrane segments (helical) span residues 4 to 24 and 57 to 77; these read VISAASVIAAGLAVGLASIGP and LAFMEALTIYGLVVALALLFA.

The protein belongs to the ATPase C chain family. In terms of assembly, F-type ATPases have 2 components, F(1) - the catalytic core - and F(0) - the membrane proton channel. F(1) has five subunits: alpha(3), beta(3), gamma(1), delta(1), epsilon(1). F(0) has four main subunits: a(1), b(1), b'(1) and c(10-14). The alpha and beta chains form an alternating ring which encloses part of the gamma chain. F(1) is attached to F(0) by a central stalk formed by the gamma and epsilon chains, while a peripheral stalk is formed by the delta, b and b' chains.

Its subcellular location is the plastid. The protein resides in the chloroplast thylakoid membrane. Functionally, f(1)F(0) ATP synthase produces ATP from ADP in the presence of a proton or sodium gradient. F-type ATPases consist of two structural domains, F(1) containing the extramembraneous catalytic core and F(0) containing the membrane proton channel, linked together by a central stalk and a peripheral stalk. During catalysis, ATP synthesis in the catalytic domain of F(1) is coupled via a rotary mechanism of the central stalk subunits to proton translocation. Its function is as follows. Key component of the F(0) channel; it plays a direct role in translocation across the membrane. A homomeric c-ring of between 10-14 subunits forms the central stalk rotor element with the F(1) delta and epsilon subunits. The sequence is that of ATP synthase subunit c, chloroplastic from Zygnema circumcarinatum (Green alga).